The following is a 284-amino-acid chain: T-cell leukemia homeobox protein 2 (284 aa).

Disordered stretches follow at residues 1 to 50 (MEPG…NGAF), 78 to 106 (GGVI…GPSG), and 139 to 166 (FSGT…SFSR). Over residues 30-50 (TPGGGLGLGRGGQGHGENGAF) the composition is skewed to gly residues. A compositionally biased stretch (pro residues) spans 87 to 96 (RPLPVPPPAG). A DNA-binding region (homeobox) is located at residues 157–216 (RKKPRTSFSRSQVLELERRFLRQKYLASAERAALAKALRMTDAQVKTWFQNRRTKWRRQT).

It localises to the nucleus. In terms of biological role, transcription activator that binds DNA elements with the consensus sequence 5'-CGGTAATTGG-3'. Binds DNA via its homeobox. Required for normal cell death of enteric neurons in the gastrointestinal tract. Required for normal development of the enteric nervous system, and for proper development of normal motility of the gastrointestinal tract. The protein is T-cell leukemia homeobox protein 2 (TLX2) of Homo sapiens (Human).